We begin with the raw amino-acid sequence, 378 residues long: Alpha-D-ribose 1-methylphosphonate 5-triphosphate diphosphatase (378 aa).

The protein belongs to the metallo-dependent hydrolases superfamily.

The catalysed reaction is alpha-D-ribose 1-methylphosphonate 5-triphosphate + H2O = alpha-D-ribose 1-methylphosphonate 5-phosphate + diphosphate + H(+). Functionally, catalyzes the hydrolysis of alpha-D-ribose 1-methylphosphonate triphosphate (RPnTP) to form alpha-D-ribose 1-methylphosphonate phosphate (PRPn) and diphosphate. This chain is Alpha-D-ribose 1-methylphosphonate 5-triphosphate diphosphatase (phnM), found in Escherichia coli (strain K12).